The following is a 161-amino-acid chain: MTDQQTNGAAAEDNSPQFSLQRIYVRDLSFEAPKSPQIFRQTWEPSVALDLNTKQKSLEGDFHEVVLTLSVTVKNGDEVAFIAEVQQAGIFLIANLDAPSMSHTLGAFCPNILFPYAREALDSLVTRGSFPALMLSPVNFDALYAQEMQRMQEAGEAPTVQ.

Belongs to the SecB family. In terms of assembly, homotetramer, a dimer of dimers. One homotetramer interacts with 1 SecA dimer.

The protein resides in the cytoplasm. Its function is as follows. One of the proteins required for the normal export of preproteins out of the cell cytoplasm. It is a molecular chaperone that binds to a subset of precursor proteins, maintaining them in a translocation-competent state. It also specifically binds to its receptor SecA. The chain is Protein-export protein SecB from Pseudomonas putida (strain ATCC 700007 / DSM 6899 / JCM 31910 / BCRC 17059 / LMG 24140 / F1).